A 421-amino-acid polypeptide reads, in one-letter code: BEN domain-containing protein 5 (421 aa).

Lysine 133 carries the N6-acetyllysine modification. Residues 180-243 (RALYEELLRN…LNRRLQDVLL (64 aa)) are a coiled coil. Lysine 258 participates in a covalent cross-link: Glycyl lysine isopeptide (Lys-Gly) (interchain with G-Cter in SUMO2). The BEN domain maps to 302–408 (GSGIWVDEEK…EKIMDINKSC (107 aa)).

Functionally, acts as a transcriptional repressor. In Mus musculus (Mouse), this protein is BEN domain-containing protein 5 (Bend5).